Here is a 691-residue protein sequence, read N- to C-terminus: L-type lectin-domain containing receptor kinase S.6 (691 aa).

The N-terminal stretch at 1–25 (MNHHHYSLVIFHLILFLSLDFPTLS) is a signal peptide. Residues 26 to 311 (HRFSPPLQNL…VVGLKIPVWS (286 aa)) lie on the Extracellular side of the membrane. Residues 27 to 257 (RFSPPLQNLT…LHIVERWKFR (231 aa)) are legume-lectin like. Residues asparagine 34 and asparagine 89 are each glycosylated (N-linked (GlcNAc...) asparagine). The helical transmembrane segment at 312-332 (LLPGLAAIVILVAFIVFSLIC) threads the bilayer. Topologically, residues 333–691 (GKKRISEEAD…PWMTPKSHFS (359 aa)) are cytoplasmic. One can recognise a Protein kinase domain in the interval 366–653 (FNENAIVGQG…IRGEAPLPVL (288 aa)). ATP-binding positions include 372-380 (VGQGASATV) and lysine 394. The active-site Proton acceptor is aspartate 500.

In the C-terminal section; belongs to the protein kinase superfamily. Ser/Thr protein kinase family. It in the N-terminal section; belongs to the leguminous lectin family.

The protein resides in the cell membrane. It catalyses the reaction L-seryl-[protein] + ATP = O-phospho-L-seryl-[protein] + ADP + H(+). The catalysed reaction is L-threonyl-[protein] + ATP = O-phospho-L-threonyl-[protein] + ADP + H(+). In terms of biological role, involved in resistance response to the pathogenic oomycetes Phytophthora infestans and Phytophthora capsici and to the pathogenic bacteria Pseudomonas syringae. The polypeptide is L-type lectin-domain containing receptor kinase S.6 (Arabidopsis thaliana (Mouse-ear cress)).